Consider the following 319-residue polypeptide: Methionyl-tRNA formyltransferase (319 aa).

(6S)-5,6,7,8-tetrahydrofolate is bound at residue 114 to 117 (SLLP).

It belongs to the Fmt family.

It catalyses the reaction L-methionyl-tRNA(fMet) + (6R)-10-formyltetrahydrofolate = N-formyl-L-methionyl-tRNA(fMet) + (6S)-5,6,7,8-tetrahydrofolate + H(+). Functionally, attaches a formyl group to the free amino group of methionyl-tRNA(fMet). The formyl group appears to play a dual role in the initiator identity of N-formylmethionyl-tRNA by promoting its recognition by IF2 and preventing the misappropriation of this tRNA by the elongation apparatus. The polypeptide is Methionyl-tRNA formyltransferase (Acinetobacter baylyi (strain ATCC 33305 / BD413 / ADP1)).